A 346-amino-acid chain; its full sequence is MARHPRWTLSQVTELFEKPLLELLFEAQQIHRQHFDPQQVQVSTLLSIKTGACPEDCKYCPQSSRYKTGLEAERLMEVEQVLDSARKAKNAGSTRFCMGAAWRNPHERDMPYLEKIVQGVKAMGLETCMTLGMLNESQAQRLANAGLDYYNHNLDTSPEFYGNIITTRTYQERLDTLEKVREAGIKVCSGGIVGLGETVTDRAGLLLQLANLPTPPESVPINMLVKVKGTPLADNDDVDAFDFIRTIAVARIMMPTSYVRLSAGREQMNEQTQAMCFMAGANSIFYGCKLLTTPNPAEDKDLQLFRKLGLNPQQTRVLAGDNEQQQRLEQTLMTPDTDDYYNAAAL.

In terms of domain architecture, Radical SAM core spans 38 to 256; sequence QQVQVSTLLS…IAVARIMMPT (219 aa). Residues cysteine 53, cysteine 57, and cysteine 60 each coordinate [4Fe-4S] cluster. [2Fe-2S] cluster contacts are provided by cysteine 97, cysteine 128, cysteine 188, and arginine 260.

Belongs to the radical SAM superfamily. Biotin synthase family. Homodimer. The cofactor is [4Fe-4S] cluster. Requires [2Fe-2S] cluster as cofactor.

The enzyme catalyses (4R,5S)-dethiobiotin + (sulfur carrier)-SH + 2 reduced [2Fe-2S]-[ferredoxin] + 2 S-adenosyl-L-methionine = (sulfur carrier)-H + biotin + 2 5'-deoxyadenosine + 2 L-methionine + 2 oxidized [2Fe-2S]-[ferredoxin]. Its pathway is cofactor biosynthesis; biotin biosynthesis; biotin from 7,8-diaminononanoate: step 2/2. Functionally, catalyzes the conversion of dethiobiotin (DTB) to biotin by the insertion of a sulfur atom into dethiobiotin via a radical-based mechanism. The chain is Biotin synthase from Salmonella newport (strain SL254).